Reading from the N-terminus, the 275-residue chain is Tryptophan synthase alpha chain (275 aa).

The Proton acceptor role is filled by glutamate 51.

Belongs to the TrpA family. As to quaternary structure, tetramer of two alpha and two beta chains.

The catalysed reaction is (1S,2R)-1-C-(indol-3-yl)glycerol 3-phosphate + L-serine = D-glyceraldehyde 3-phosphate + L-tryptophan + H2O. It participates in amino-acid biosynthesis; L-tryptophan biosynthesis; L-tryptophan from chorismate: step 5/5. Functionally, the alpha subunit is responsible for the aldol cleavage of indoleglycerol phosphate to indole and glyceraldehyde 3-phosphate. The chain is Tryptophan synthase alpha chain from Caulobacter vibrioides (strain ATCC 19089 / CIP 103742 / CB 15) (Caulobacter crescentus).